The sequence spans 300 residues: Lysenin-related protein 3 (300 aa).

Residues 12 to 35 (EEIEVDVVAVWKEGYVYENRGDTS) form an N-terminal cap domain region. The tract at residues 36–109 (VEQKITMTKG…SQVIEHTVTI (74 aa)) is beta-hairpin domain. Residues 110 to 158 (PPTSKFTRWKLNADVGGTDIEYMYLIDEVTPISVTQTIPQVIRSRAKIL) are N-terminal cap domain. Positions 159 to 299 (VGRQIHLGTT…EDKWILEVVN (141 aa)) are C-terminal receptor-binding domain. Residues Lys187, Ser229, Tyr235, and Tyr284 each contribute to the an N-(acyl)-sphingosylphosphocholine site. The cysteines at positions 274 and 285 are disulfide-linked.

It belongs to the lysenin family. As to quaternary structure, binds to sphingomyelin as a monomer by using its C-terminal domain. Forms a nonamer when sphingomyelin/LRP-3 ratio is lower than ca 500. Oligomerization, but not binding, is influenced by the fluidity of sphingomyelin. Expressed by coelomocytes.

The protein resides in the secreted. The protein localises to the target cell membrane. Functionally, pore-forming toxin that specifically binds sphingomyelin in the plasma membrane of various cells. Has antibacterial and hemolytic activity. This is Lysenin-related protein 3 from Eisenia fetida (Red wiggler worm).